The primary structure comprises 538 residues: Small ribosomal subunit protein uS3m (538 aa).

Residues 111–134 (SSEGTEEERNEVRGRGAGKRVESI) are disordered. A compositionally biased stretch (basic and acidic residues) spans 120–134 (NEVRGRGAGKRVESI).

The protein belongs to the universal ribosomal protein uS3 family.

It localises to the mitochondrion. The polypeptide is Small ribosomal subunit protein uS3m (RPS3) (Oryza sativa subsp. japonica (Rice)).